The following is a 504-amino-acid chain: ATP synthase subunit alpha (504 aa).

Glycine 169 to threonine 176 provides a ligand contact to ATP.

The protein belongs to the ATPase alpha/beta chains family. As to quaternary structure, F-type ATPases have 2 components, CF(1) - the catalytic core - and CF(0) - the membrane proton channel. CF(1) has five subunits: alpha(3), beta(3), gamma(1), delta(1), epsilon(1). CF(0) has three main subunits: a(1), b(2) and c(9-12). The alpha and beta chains form an alternating ring which encloses part of the gamma chain. CF(1) is attached to CF(0) by a central stalk formed by the gamma and epsilon chains, while a peripheral stalk is formed by the delta and b chains.

Its subcellular location is the cell membrane. It carries out the reaction ATP + H2O + 4 H(+)(in) = ADP + phosphate + 5 H(+)(out). In terms of biological role, produces ATP from ADP in the presence of a proton gradient across the membrane. The alpha chain is a regulatory subunit. This Clostridium kluyveri (strain ATCC 8527 / DSM 555 / NBRC 12016 / NCIMB 10680 / K1) protein is ATP synthase subunit alpha.